A 353-amino-acid chain; its full sequence is Tsukushi (353 aa).

A signal peptide spans 1–17; it reads MLCTLFLLLLALGIVQT. Residues 18–59 form the LRRNT domain; the sequence is TRPCFPGCQCEEETFGLFDSFSLIRVDCSSLGPHIVPVPIPL. LRR repeat units lie at residues 60 to 80, 86 to 107, 110 to 131, 133 to 154, 160 to 180, 186 to 207, 208 to 228, 231 to 253, 256 to 277, and 281 to 302; these read DTAHLDLSSNRLETVNESVLG, TLAGLDLSHNLLTSITPTAFSR, YLESLDLSHNGLAALPAEVFTS, PLSDINLSHNRLREVSISAFTT, ALHVDLSHNLIHRLLPYPARA, TIQSLNLSWNRLRAVPDLRDLP, LRYLSLDGNPLATINPGAFMG, GLTHLSLASLQGILQLPPHGFRE, GLQVLDLSGNPKLKWAGAEVFS, and LLQELDLSGSSLVPLPETLLHH. A glycan (N-linked (GlcNAc...) asparagine) is linked at N75. Residue N138 is glycosylated (N-linked (GlcNAc...) asparagine). N-linked (GlcNAc...) asparagine glycosylation is present at N191.

As to quaternary structure, interacts with FZD4 (via FZ domain); competes with WNT2B for binding to FZD4, inhibiting Wnt signaling and repressing peripheral eye development. Interacts with TGFB1; the interaction contributes to regulation of the hair cycle. Interacts with netrin. Interacts with CCN2. In terms of tissue distribution, expressed at high levels in the liver, small intestine and placenta. Not or barely detectable in other tissues, including whole pancreas, adipose tissues, skeletal muscle, kidney, spleen, brain, lung and testis.

Its subcellular location is the secreted. Its function is as follows. Contributes to various developmental events and other processes such as wound healing and cholesterol homeostasis through its interactions with multiple signaling pathways. Wnt signaling inhibitor which competes with WNT2B for binding to Wnt receptor FZD4 and represses WNT2B-dependent development of the peripheral eye. Plays a role in regulating the hair cycle by controlling TGFB1 signaling. Required for the development of the anterior commissure in the brain by inhibiting neurite outgrowth. Essential for terminal differentiation of hippocampal neural stem cells. Plays a role in regulating bone elongation and bone mass by modulating growth plate chondrocyte function and overall body size. Required for development of the inner ear through its involvement in stereocilia formation in inner hair cells. Facilitates wound healing by inhibiting secretion of TGFB1 from macrophages which prevents myofibroblast differentiation, maintaining inflammatory cell quiescence. Plays a role in cholesterol homeostasis by reducing circulating high-density lipoprotein cholesterol, lowering cholesterol efflux capacity and decreasing cholesterol-to-bile acid conversion in the liver. In one study, shown to negatively regulate sympathetic innervation in brown fat, leading to reduced energy expenditure. In another study, shown not to affect brown fat thermogenic capacity, body weight gain or glucose homeostasis. The polypeptide is Tsukushi (Tsku) (Rattus norvegicus (Rat)).